Here is a 411-residue protein sequence, read N- to C-terminus: MWSGWWLWPLVAVCTADFFRDEAERIMRDSPVIDGHNDLPWQLLDMFNNRLQDERANLTTLAGTHTNIPKLRAGFVGGQFWSVYTPCDTQNKDAVRRTLEQMDVVHRMCRMYPETFLYVTSSAGIRQAFREGKVASLIGVEGGHSIDSSLGVLRALYQLGMRYLTLTHSCNTPWADNWLVDTGDSEPQSQGLSPFGQRVVKELNRLGVLIDLAHVSVATMKATLQLSRAPVIFSHSSAYSVCASRRNVPDDVLRLVKQTDSLVMVNFYNNYISCTNKANLSQVADHLDHIKEVAGARAVGFGGDFDGVPRVPEGLEDVSKYPDLIAELLRRNWTEAEVKGALADNLLRVFEAVEQASNLTQAPEEEPIPLDQLGGSCRTHYGYSSGASSLHRHWGLLLASLAPLVLCLSLL.

The signal sequence occupies residues 1–16 (MWSGWWLWPLVAVCTA). Residues H36 and D38 each coordinate Zn(2+). The N-linked (GlcNAc...) asparagine glycan is linked to N57. C87 and C170 are joined by a disulfide. E141 lines the Zn(2+) pocket. H168 is a binding site for substrate. Zn(2+) contacts are provided by H214 and H235. An intrachain disulfide couples C242 to C274. R246 lines the substrate pocket. N279 carries N-linked (GlcNAc...) asparagine glycosylation. D304 serves as a coordination point for substrate. Residues N332 and N358 are each glycosylated (N-linked (GlcNAc...) asparagine). A lipid anchor (GPI-anchor amidated serine) is attached at S385. The propeptide at 386–411 (GASSLHRHWGLLLASLAPLVLCLSLL) is removed in mature form.

The protein belongs to the metallo-dependent hydrolases superfamily. Peptidase M19 family. Homodimer; disulfide-linked. Requires Zn(2+) as cofactor. As to expression, expressed in lung and kidneys.

The protein resides in the apical cell membrane. It is found in the cell projection. The protein localises to the microvillus membrane. It carries out the reaction an L-aminoacyl-L-amino acid + H2O = 2 an L-alpha-amino acid. It catalyses the reaction leukotriene D4 + H2O = leukotriene E4 + glycine. The catalysed reaction is a beta-lactam + H2O = a substituted beta-amino acid. The enzyme catalyses L-cystine-bis-glycine + 2 H2O = L-cystine + 2 glycine. It carries out the reaction glycyldehydrophenylalanine + H2O = 2,3-didehydrophenylalanine + glycine. Its activity is regulated as follows. Inhibited by L-penicillamine. Beta-lactamase activity is inhibited by cilastatin. Functionally, hydrolyzes a wide range of dipeptides including the conversion of leukotriene D4 to leukotriene E4. Hydrolyzes cystinyl-bis-glycine (cys-bis-gly) formed during glutathione degradation. Also possesses beta lactamase activity and can hydrolyze the beta-lactam antibiotic imipenem. In terms of biological role, independently of its dipeptidase activity, acts as an adhesion receptor for neutrophil recruitment from bloodstream into inflamed lungs and liver. This is Dipeptidase 1 (DPEP1) from Homo sapiens (Human).